The primary structure comprises 478 residues: Poly(A) RNA polymerase cid11 (478 aa).

2 residues coordinate Mg(2+): aspartate 106 and aspartate 108. The PAP-associated domain occupies 263–317 (SLGRLLIDFFYYYGFSFNYLDSVVSVRSGTVLNKQEKGWAMEVNNSLCVEEPFNT). Residues 428-447 (QSYENKANRDSDFQGQTSLT) are disordered.

Belongs to the DNA polymerase type-B-like family. Mg(2+) serves as cofactor. The cofactor is Mn(2+).

Its subcellular location is the cytoplasm. The protein resides in the nucleus. The catalysed reaction is RNA(n) + ATP = RNA(n)-3'-adenine ribonucleotide + diphosphate. The chain is Poly(A) RNA polymerase cid11 (cid11) from Schizosaccharomyces pombe (strain 972 / ATCC 24843) (Fission yeast).